Consider the following 278-residue polypeptide: Elongation factor Ts 1, mitochondrial (278 aa).

This sequence belongs to the EF-Ts family.

The protein localises to the mitochondrion. Its function is as follows. Associates with the EF-Tu.GDP complex and induces the exchange of GDP to GTP. It remains bound to the aminoacyl-tRNA.EF-Tu.GTP complex up to the GTP hydrolysis stage on the ribosome. The protein is Elongation factor Ts 1, mitochondrial of Trypanosoma cruzi (strain CL Brener).